The sequence spans 247 residues: Probable transcriptional regulatory protein TDE_1487 (247 aa).

Belongs to the TACO1 family.

The protein resides in the cytoplasm. This is Probable transcriptional regulatory protein TDE_1487 from Treponema denticola (strain ATCC 35405 / DSM 14222 / CIP 103919 / JCM 8153 / KCTC 15104).